The following is a 362-amino-acid chain: Molybdenum import ATP-binding protein ModC (362 aa).

Positions 4-238 constitute an ABC transporter domain; the sequence is AGEAAIRARF…LDLPIRLGED (235 aa). Residue 38–45 coordinates ATP; that stretch reads GHSGSGKT. The 66-residue stretch at 297 to 362 folds into the Mop domain; sequence GTSILNTLPA…AQIKAVALVG (66 aa).

It belongs to the ABC transporter superfamily. Molybdate importer (TC 3.A.1.8) family. As to quaternary structure, the complex is composed of two ATP-binding proteins (ModC), two transmembrane proteins (ModB) and a solute-binding protein (ModA).

It localises to the cell inner membrane. It carries out the reaction molybdate(out) + ATP + H2O = molybdate(in) + ADP + phosphate + H(+). In terms of biological role, part of the ABC transporter complex ModABC involved in molybdenum import. Responsible for energy coupling to the transport system. In Thiobacillus denitrificans (strain ATCC 25259 / T1), this protein is Molybdenum import ATP-binding protein ModC.